The chain runs to 467 residues: Mitochondrial distribution and morphology protein 10 (467 aa).

It belongs to the MDM10 family. In terms of assembly, component of the ER-mitochondria encounter structure (ERMES) or MDM complex, composed of MMM1, MDM10, MDM12 and MDM34. Associates with the mitochondrial outer membrane sorting assembly machinery SAM(core) complex.

The protein localises to the mitochondrion outer membrane. In terms of biological role, component of the ERMES/MDM complex, which serves as a molecular tether to connect the endoplasmic reticulum and mitochondria. Components of this complex are involved in the control of mitochondrial shape and protein biogenesis and may function in phospholipid exchange. MDM10 is involved in the late assembly steps of the general translocase of the mitochondrial outer membrane (TOM complex). Functions in the TOM40-specific route of the assembly of outer membrane beta-barrel proteins, including the association of TOM40 with the receptor TOM22 and small TOM proteins. Can associate with the SAM(core) complex as well as the MDM12-MMM1 complex, both involved in late steps of the major beta-barrel assembly pathway, that is responsible for biogenesis of all outer membrane beta-barrel proteins. May act as a switch that shuttles between both complexes and channels precursor proteins into the TOM40-specific pathway. Plays a role in mitochondrial morphology and in the inheritance of mitochondria. The protein is Mitochondrial distribution and morphology protein 10 of Ajellomyces capsulatus (strain G186AR / H82 / ATCC MYA-2454 / RMSCC 2432) (Darling's disease fungus).